Here is a 177-residue protein sequence, read N- to C-terminus: Large ribosomal subunit protein uL6 (177 aa).

It belongs to the universal ribosomal protein uL6 family. In terms of assembly, part of the 50S ribosomal subunit.

Functionally, this protein binds to the 23S rRNA, and is important in its secondary structure. It is located near the subunit interface in the base of the L7/L12 stalk, and near the tRNA binding site of the peptidyltransferase center. The protein is Large ribosomal subunit protein uL6 of Stutzerimonas stutzeri (strain A1501) (Pseudomonas stutzeri).